Reading from the N-terminus, the 85-residue chain is MEKLTFLILVATVLLTIHVLVQSVGDKHLKRRPKQYATKHLSALMRGHRQCTQQGYGCDETEECCSNLSCKCSGSPLCTSSYCRP.

Positions Met1–Ser23 are cleaved as a signal peptide. The propeptide occupies Val24–Arg49. Gln50 is modified (pyrrolidone carboxylic acid).

This sequence belongs to the conotoxin O2 superfamily. In terms of processing, contains 4 disulfide bonds. In terms of tissue distribution, expressed by the venom duct.

It is found in the secreted. This Conus capitaneus (Captain cone) protein is Conotoxin Cap15a.